The sequence spans 270 residues: Centromere protein Q (270 aa).

The disordered stretch occupies residues 1-59 (MSGKANTSKKKSQRVKRNVKQRADKEDEELDSPENKVGNRAKRNRSHAGHLSSKEQTKC). 2 stretches are compositionally biased toward basic residues: residues 7-20 (TSKK…RNVK) and 39-48 (NRAKRNRSHA). Residue serine 52 is modified to Phosphoserine. Residues 143–205 (LKVEREQERA…EEEMKEVFHI (63 aa)) adopt a coiled-coil conformation.

The protein belongs to the CENP-Q/OKP1 family. In terms of assembly, component of the CENPA-CAD complex, composed of CENPI, CENPK, CENPL, CENPO, CENPP, CENPQ, CENPR and CENPS. The CENPA-CAD complex interacts with the CENPA-NAC complex, at least composed of CENPA, CENPC, CENPH, CENPM, CENPN, CENPT and CENPU. In terms of processing, phosphorylation at Ser-52 is essential for CENPE recruitment to kinetochores and orderly chromosome congression.

It localises to the nucleus. The protein localises to the chromosome. The protein resides in the centromere. In terms of biological role, component of the CENPA-CAD (nucleosome distal) complex, a complex recruited to centromeres which is involved in assembly of kinetochore proteins, mitotic progression and chromosome segregation. May be involved in incorporation of newly synthesized CENPA into centromeres via its interaction with the CENPA-NAC complex. Plays an important role in chromosome congression and in the recruitment of CENP-O complex (which comprises CENPO, CENPP, CENPQ and CENPU), CENPE and PLK1 to the kinetochores. In Rattus norvegicus (Rat), this protein is Centromere protein Q (Cenpq).